The chain runs to 405 residues: Argininosuccinate synthase (405 aa).

ATP-binding positions include 10-18 and Ala-37; that span reads AYSGGLDTS. Tyr-88 and Ser-93 together coordinate L-citrulline. Residue Gly-118 coordinates ATP. Positions 120, 124, and 125 each coordinate L-aspartate. Asn-124 contributes to the L-citrulline binding site. L-citrulline-binding residues include Arg-128, Ser-179, Ser-188, Glu-264, and Tyr-276.

This sequence belongs to the argininosuccinate synthase family. Type 1 subfamily. In terms of assembly, homotetramer.

It localises to the cytoplasm. The catalysed reaction is L-citrulline + L-aspartate + ATP = 2-(N(omega)-L-arginino)succinate + AMP + diphosphate + H(+). It participates in amino-acid biosynthesis; L-arginine biosynthesis; L-arginine from L-ornithine and carbamoyl phosphate: step 2/3. The sequence is that of Argininosuccinate synthase from Pseudomonas savastanoi pv. phaseolicola (strain 1448A / Race 6) (Pseudomonas syringae pv. phaseolicola (strain 1448A / Race 6)).